The sequence spans 440 residues: MPDSGTLGTPPPEQGPTPPTTLPDVPAPVIPSASVTSAASDFLAALHPPVTVPDPAPPPPPAPAAGNPPDTVTGDSVLQRILRGPTGPGTTSLAPAVRYGRQPGPEAPASAPPAAGRAVPGLYHHPVPEPDPVRVEEVSRRIKRWAEDEVQLYPEEWEGQFDGFSVGRYMVGCHPDAPTVDHLMLATRLMVAENAVDDCYCEDHGGSPVGLGGRLLLAHTAIDHFHSTAEYTPTWQASLAADAPRRAYDSAMGYFVRAATPSQSDRYRHDMARLHLGYLAEGAWAQTGHVPEVWEYLAMRQFNNFRPCPTITDTVGGYELPADLHARPDMQRVIALAGNATTIVNDLYSYTKELNSPGRHLNLPVVIAEREQLCERDAYLKAVEVHNELQHSFEAAAADLAEACPLPPVLRFLRGVAAWVDGNHDWHRTNTYRYSLPDFW.

Disordered regions lie at residues 1–33 (MPDS…IPSA) and 46–74 (LHPP…TVTG). 2 stretches are compositionally biased toward pro residues: residues 9-29 (TPPP…PAPV) and 50-63 (VTVP…PPAP). Positions 197, 198, 202, 345, 349, and 353 each coordinate Mg(2+).

Belongs to the terpene synthase family. 2-methylisoborneol synthase subfamily. The cofactor is Mg(2+).

The enzyme catalyses (E)-2-methylgeranyl diphosphate + H2O = 2-methylisoborneol + diphosphate. Catalyzes the cyclization of 2-methylgeranyl diphosphate (2-MeGPP) to 2-methylisoborneol (2-MIB), which likely involves the intermediacy of 2-methyllinalyl diphosphate. Is also able to catalyze the cyclization of geranyl diphosphate (GPP), albeit with much lower efficiency, leading to the formation of a complex mixture of cyclic monoterpenes, consisting of alpha-pinene (6%), beta-pinene (23%), limonene (32%), gamma-terpinene (29%), and delta-terpinene (10%). This Streptomyces coelicolor (strain ATCC BAA-471 / A3(2) / M145) protein is 2-methylisoborneol synthase.